A 1502-amino-acid chain; its full sequence is Ras guanine nucleotide exchange factor P (1502 aa).

Residues 84-187 enclose the Calponin-homology (CH) domain; that stretch reads FIIDNQVLDW…LLYSLMKFSE (104 aa). Disordered stretches follow at residues 216-242, 325-436, 456-534, and 589-935; these read AQSSSSSPTTSTSASTSTSTSPSSSNE, QQQQ…PNNN, EDNT…VGRG, and TTTA…NQNN. 4 stretches are compositionally biased toward low complexity: residues 218 to 242, 325 to 345, 371 to 400, and 407 to 421; these read SSSSSPTTSTSASTSTSTSPSSSNE, QQQQPPPQTSTCTTTQPTTTT, TTSSIIKKAAPAPLKKPSPANTSSNSLLNH, and SSSTASSAINTPIST. A coiled-coil region spans residues 287 to 328; it reads QQQQQQQQQQQQQQQQQQQQQQQQQQQQQQQQQQQQQQQQQQ. Positions 422–436 are enriched in polar residues; that stretch reads PSTSKSNSFQKPNNN. Residues 451–515 adopt a coiled-coil conformation; it reads EENEIEDNTN…NQNENEDEVK (65 aa). The span at 458–508 shows a compositional bias: low complexity; it reads NTNNNNNNNNNNNNNNNNNNNNNNNNNNNNNNNNTNDNINNNNKNNNNNQN. Over residues 518 to 528 the composition is skewed to pro residues; it reads HSPPKVRPPLP. Low complexity-rich tracts occupy residues 589–646, 663–675, 686–719, 764–790, and 813–853; these read TTTA…NNNN, TISTSSPSTTGTI, SQPLNNNNNINNENNNSNNSNSLVTSSSPPLSLP, NSINQPPSNSSPKQSPVPNNPPSVSQS, and NSNS…NNNN. The segment covering 861-876 has biased composition (polar residues); the sequence is LTMSNQSANSLKSSGN. Positions 883-935 are enriched in low complexity; that stretch reads TNGNNNISQNQNQNQNQNQNQTQNQNQNQNQNHISHSNSISSGNLNNHVNQNN. The stretch at 1032 to 1076 forms a coiled coil; the sequence is VEENKNLITRTEEMQKMIDSLMKEKKELINEKNTLASMLAKTKQQ. Residues 1102 to 1249 enclose the N-terminal Ras-GEF domain; that stretch reads GKYEIKGGTT…SELKLVFSTP (148 aa). The region spanning 1267–1498 is the Ras-GEF domain; it reads DPAEIARQLT…FNLSLICEPR (232 aa).

In terms of biological role, promotes the exchange of Ras-bound GDP by GTP. This Dictyostelium discoideum (Social amoeba) protein is Ras guanine nucleotide exchange factor P (gefP).